The primary structure comprises 175 residues: ATP synthase subunit b 1 (175 aa).

A helical membrane pass occupies residues 26 to 48 (IINLAIIIGVLYVYGSKFIGNIL).

Belongs to the ATPase B chain family. F-type ATPases have 2 components, F(1) - the catalytic core - and F(0) - the membrane proton channel. F(1) has five subunits: alpha(3), beta(3), gamma(1), delta(1), epsilon(1). F(0) has four main subunits: a(1), b(1), b'(1) and c(10-14). The alpha and beta chains form an alternating ring which encloses part of the gamma chain. F(1) is attached to F(0) by a central stalk formed by the gamma and epsilon chains, while a peripheral stalk is formed by the delta, b and b' chains.

The protein resides in the cellular thylakoid membrane. F(1)F(0) ATP synthase produces ATP from ADP in the presence of a proton or sodium gradient. F-type ATPases consist of two structural domains, F(1) containing the extramembraneous catalytic core and F(0) containing the membrane proton channel, linked together by a central stalk and a peripheral stalk. During catalysis, ATP synthesis in the catalytic domain of F(1) is coupled via a rotary mechanism of the central stalk subunits to proton translocation. In terms of biological role, component of the F(0) channel, it forms part of the peripheral stalk, linking F(1) to F(0). This Picosynechococcus sp. (strain ATCC 27264 / PCC 7002 / PR-6) (Agmenellum quadruplicatum) protein is ATP synthase subunit b 1.